The chain runs to 472 residues: MNAVSDQAVADYHVADMSLAAWGRRELAIAETEMPGLMAIREEFAASQPLKGARIAGSLHMTIQTGVLIETLVALGAEVRWASCNIFSTQDHAAAAIAATGTPVFAVKGETLEEYWQYTHRIFEWPEGRHANMILDDGGDATLLLHLGARAEQDASVLAKPGSEEERVLFAAIKATLARDPKWYSTRLAQIRGVTEETTTGVHRLYQMAQKGELAFAAINVNDSVTKSKFDNLYGCRESLVDGIKRATDVMVAGKIAVVAGYGDVGKGCAQALAALRAQVWVTEIDPICALQAAMEGYKVVTMEEAAPHADIFVTATGNYHVITREHMQAMKDQAIVCNIGHFDNEIDVAALDDCQWEEIKPQVDHVVFPDGKRIILLAKGRLVNLGCATGHPSFVMSSSFANQTIAQIELYTRNEAYTRGQVYVLPKHLDEKVARLHLKKLGAKLTSLRQDQADYINVPVEGPYKPDHYRY.

The substrate site is built by Thr62, Asp137, and Glu197. Residue 198-200 participates in NAD(+) binding; it reads TTT. Residues Lys227 and Asp231 each coordinate substrate. NAD(+) contacts are provided by residues Asn232, 261 to 266, Glu284, Asn319, 340 to 342, and Asn385; these read GYGDVG and IGH.

It belongs to the adenosylhomocysteinase family. Requires NAD(+) as cofactor.

The protein resides in the cytoplasm. The catalysed reaction is S-adenosyl-L-homocysteine + H2O = L-homocysteine + adenosine. The protein operates within amino-acid biosynthesis; L-homocysteine biosynthesis; L-homocysteine from S-adenosyl-L-homocysteine: step 1/1. May play a key role in the regulation of the intracellular concentration of adenosylhomocysteine. The sequence is that of Adenosylhomocysteinase from Bordetella petrii (strain ATCC BAA-461 / DSM 12804 / CCUG 43448).